A 388-amino-acid polypeptide reads, in one-letter code: Subtilisin-like serine protease AsES (388 aa).

Positions M1 to G15 are cleaved as a signal peptide. Residues A16–A105 constitute a propeptide, removed in mature form. The Peptidase S8 domain occupies P114–G388. C141 and C230 form a disulfide bridge. Active-site charge relay system residues include D146 and H176. N-linked (GlcNAc...) asparagine glycans are attached at residues N232 and N237. A disulfide bridge connects residues C285 and C357. Catalysis depends on S331, which acts as the Charge relay system.

This sequence belongs to the peptidase S8 family.

The protein resides in the secreted. The elicitor proteolytic activity is completely inhibited by PMSF. The activity is also significantly reduced by aprotinin (leading to 37% residual activity), by leupeptin (leading to 54% residual activity), by the ovomucoid trypsin inhibitor (leading to 65% residual activity), and by p-aminobenzamidine (leading to 26% residual activity). Functionally, extracellular elicitor protein that induces a strong defense response in strawberry and confers both local and systemic plant resistance against the fungal pathogen Colletotricum acutatum, the casual agent of anthracnose disease. AsES activates a cascade of defense responses, including calcium influx, oxidative burst, hypersensitive cell-death response (HR), accumulation of autofluorescent compounds, cell-wall reinforcement with callose and lignin deposition, salicylic acid accumulation, and expression of defense-related genes, such as PR1, PG1, MYB30, RBOH-D, RBOH-F, CHI23, and FLS. The oxidative burst consists in a progressive extracellular accumulation of H(2)O(2) that starts immediately after the contact with AsES and is preceded by a rapid and transient cell membrane depolarization. During this phase takes place also a rapid intracellular accumulation of NO at the chloroplasts. After the first extracellular H(2)O(2) production phase, two intracellular H(2)O(2) accumulation events occur, the first 2 hours after induction, and the second 7 hours after induction. AsES also produces a transient increase of ion leakage, and a progressive alkalinization of the extracellular medium. Confers also local and systemic plant resistance against Botrytis cinerea in Arabidopsis thaliana. Systemic, but not local resistance is dependent on the length of exposure to AsES. The protection to B.cinerea is due to the induction of the plant defenses via the salicylic acid, jasmonic acid and ethylene signaling pathways. Exhibits subtilisin-like proteolytic activity which is necessary but not sufficient for its elicitor function in strawberry plants. Probably induces defense by means of proteolysis of one or multiple host proteins that are specific targets of this protease. The chain is Subtilisin-like serine protease AsES from Sarocladium strictum (Black bundle disease fungus).